We begin with the raw amino-acid sequence, 323 residues long: Thymidylate synthase (323 aa).

DUMP-binding positions include arginine 21 and 172–173; that span reads RR. The active-site Nucleophile is the cysteine 192. DUMP is bound by residues 214–217, asparagine 225, and 255–257; these read RSND and HVY. (6R)-5,10-methylene-5,6,7,8-tetrahydrofolate is bound at residue aspartate 217. A (6R)-5,10-methylene-5,6,7,8-tetrahydrofolate-binding site is contributed by alanine 322.

It belongs to the thymidylate synthase family. Bacterial-type ThyA subfamily. As to quaternary structure, homodimer.

Its subcellular location is the cytoplasm. The catalysed reaction is dUMP + (6R)-5,10-methylene-5,6,7,8-tetrahydrofolate = 7,8-dihydrofolate + dTMP. The protein operates within pyrimidine metabolism; dTTP biosynthesis. Functionally, catalyzes the reductive methylation of 2'-deoxyuridine-5'-monophosphate (dUMP) to 2'-deoxythymidine-5'-monophosphate (dTMP) while utilizing 5,10-methylenetetrahydrofolate (mTHF) as the methyl donor and reductant in the reaction, yielding dihydrofolate (DHF) as a by-product. This enzymatic reaction provides an intracellular de novo source of dTMP, an essential precursor for DNA biosynthesis. This Pseudomonas syringae pv. tomato (strain ATCC BAA-871 / DC3000) protein is Thymidylate synthase.